The chain runs to 404 residues: Snake venom metalloproteinase H5 (404 aa).

Residues 1 to 6 form the signal peptide; the sequence is FPYQGS. Residues 7-177 constitute a propeptide that is removed on maturation; sequence SIMLESGKVN…KPSWVNLTPK (171 aa). Positions 184–379 constitute a Peptidase M12B domain; the sequence is TSVNLQLVVD…KKPKCIHKKS (196 aa). 3 cysteine pairs are disulfide-bonded: Cys295-Cys374, Cys336-Cys358, and Cys338-Cys341. His320 contacts Zn(2+). Glu321 is an active-site residue. 2 residues coordinate Zn(2+): His324 and His330. Positions 379–404 are excised as a propeptide; it reads SLKTDTVSTSVSGNEPLDDNVDGFHA. The disordered stretch occupies residues 385-404; the sequence is VSTSVSGNEPLDDNVDGFHA. The segment covering 394–404 has biased composition (acidic residues); it reads PLDDNVDGFHA.

In terms of assembly, monomer. Requires Zn(2+) as cofactor. As to expression, expressed by the venom gland.

It localises to the secreted. Functionally, this probable venom zinc protease is not hemorrhagic when 3 ug are injected onto the back skin of guinea pig. The protein is Snake venom metalloproteinase H5 of Deinagkistrodon acutus (Hundred-pace snake).